The primary structure comprises 353 residues: Dihydroorotate dehydrogenase (quinone) (353 aa).

Residues 66–70 (AGFDK) and Thr-90 contribute to the FMN site. Lys-70 serves as a coordination point for substrate. Residue 115–119 (NRMGF) participates in substrate binding. Positions 143 and 176 each coordinate FMN. Asn-176 is a binding site for substrate. Ser-179 acts as the Nucleophile in catalysis. Asn-181 serves as a coordination point for substrate. The FMN site is built by Lys-212 and Thr-240. Position 241–242 (241–242 (NT)) interacts with substrate. Residues Gly-264, Gly-293, and 314 to 315 (YT) contribute to the FMN site.

The protein belongs to the dihydroorotate dehydrogenase family. Type 2 subfamily. As to quaternary structure, monomer. The cofactor is FMN.

The protein resides in the cell membrane. It carries out the reaction (S)-dihydroorotate + a quinone = orotate + a quinol. The protein operates within pyrimidine metabolism; UMP biosynthesis via de novo pathway; orotate from (S)-dihydroorotate (quinone route): step 1/1. Catalyzes the conversion of dihydroorotate to orotate with quinone as electron acceptor. The sequence is that of Dihydroorotate dehydrogenase (quinone) from Mycolicibacterium gilvum (strain PYR-GCK) (Mycobacterium gilvum (strain PYR-GCK)).